The primary structure comprises 302 residues: Probable alpha-L-glutamate ligase (302 aa).

The 184-residue stretch at L104–E287 folds into the ATP-grasp domain. Residues K141, E178–Y179, D187, and R211–N213 each bind ATP. Residues D248, E260, and N262 each coordinate Mg(2+). Positions 248, 260, and 262 each coordinate Mn(2+).

The protein belongs to the RimK family. Mg(2+) is required as a cofactor. The cofactor is Mn(2+).

The protein is Probable alpha-L-glutamate ligase of Alcanivorax borkumensis (strain ATCC 700651 / DSM 11573 / NCIMB 13689 / SK2).